The chain runs to 233 residues: Protein FAM204A (233 aa).

Residues 1 to 126 (MWSGLLPPGL…HSEPSSNETQ (126 aa)) are disordered. The segment covering 13-24 (SDAESNSEDEAT) has biased composition (acidic residues). Over residues 39–58 (ESIRKTEIIDFSTDEPKTET) the composition is skewed to basic and acidic residues. A compositionally biased stretch (basic residues) spans 97–109 (FRGKRRKRSRKDK). Residues 144-164 (VKRKKVEKSGLEKRIDQAVEE) are a coiled coil.

The protein is Protein FAM204A (FAM204A) of Homo sapiens (Human).